The chain runs to 154 residues: CASP-like protein 5C2 (154 aa).

Residues 1–17 are Cytoplasmic-facing; sequence MEHVPGSFGTSASFALR. A helical transmembrane segment spans residues 18–38; the sequence is FGQTIFSAASLIFMCFDFDFY. Over 39–41 the chain is Extracellular; that stretch reads DFT. The chain crosses the membrane as a helical span at residues 42-62; the sequence is TFCYLAMVMAIVTPWSILLAL. Topologically, residues 63 to 81 are cytoplasmic; that stretch reads TDTYSVLVKLLPQELRVLS. A helical transmembrane segment spans residues 82–102; the sequence is IVFAGDFVLSFLSLGGACAVA. The Extracellular segment spans residues 103–128; that stretch reads SATELLASADGKICDGSLCIQYQVSA. Residues 129–149 traverse the membrane as a helical segment; it reads ALAFLCWFLLLASALFNFWSL. Topologically, residues 150–154 are cytoplasmic; that stretch reads PSLYY.

Belongs to the Casparian strip membrane proteins (CASP) family. As to quaternary structure, homodimer and heterodimers.

The protein resides in the cell membrane. The polypeptide is CASP-like protein 5C2 (Arabidopsis thaliana (Mouse-ear cress)).